The primary structure comprises 535 residues: Beta-amylase 1, chloroplastic (535 aa).

The transit peptide at 1-36 (MALNLAQSAAAAACFATAGDARRAASVVAMPSSSSS) directs the protein to the chloroplast. The substrate site is built by D115, H155, and D163. The Proton donor role is filled by E247. Substrate contacts are provided by K361, H366, and T408. E446 (proton acceptor) is an active-site residue. Substrate-binding positions include 447-448 (NA) and R480.

Belongs to the glycosyl hydrolase 14 family.

Its subcellular location is the plastid. It localises to the chloroplast. It catalyses the reaction Hydrolysis of (1-&gt;4)-alpha-D-glucosidic linkages in polysaccharides so as to remove successive maltose units from the non-reducing ends of the chains.. Functionally, possesses beta-amylase activity in vitro. May be involved in cold resistance by mediating the accumulation of maltose upon freezing stress, thus contributing to the protection of membranes. The sequence is that of Beta-amylase 1, chloroplastic from Oryza sativa subsp. japonica (Rice).